The chain runs to 145 residues: Alpha-amylase/trypsin inhibitor CM2 (145 aa).

Positions methionine 1–alanine 25 are cleaved as a signal peptide.

Belongs to the protease inhibitor I6 (cereal trypsin/alpha-amylase inhibitor) family. As to expression, developing endosperm.

It is found in the secreted. Alpha-amylase/trypsin inhibitor. It could be involved in insect defense mechanisms. The chain is Alpha-amylase/trypsin inhibitor CM2 from Triticum aestivum (Wheat).